The following is a 167-amino-acid chain: S-ribosylhomocysteine lyase (167 aa).

Fe cation contacts are provided by H54, H58, and C128.

This sequence belongs to the LuxS family. In terms of assembly, homodimer. Fe cation serves as cofactor.

The catalysed reaction is S-(5-deoxy-D-ribos-5-yl)-L-homocysteine = (S)-4,5-dihydroxypentane-2,3-dione + L-homocysteine. In terms of biological role, involved in the synthesis of autoinducer 2 (AI-2) which is secreted by bacteria and is used to communicate both the cell density and the metabolic potential of the environment. The regulation of gene expression in response to changes in cell density is called quorum sensing. Catalyzes the transformation of S-ribosylhomocysteine (RHC) to homocysteine (HC) and 4,5-dihydroxy-2,3-pentadione (DPD). The protein is S-ribosylhomocysteine lyase of Haemophilus influenzae (strain 86-028NP).